Here is a 266-residue protein sequence, read N- to C-terminus: Probable carboxylesterase Os04g0669500 (266 aa).

Catalysis depends on charge relay system residues S154, D208, and H240.

The protein belongs to the AB hydrolase superfamily. AB hydrolase 2 family.

Functionally, possesses carboxylesterase activity in vitro. This chain is Probable carboxylesterase Os04g0669500, found in Oryza sativa subsp. japonica (Rice).